Reading from the N-terminus, the 141-residue chain is 15 kDa lipoprotein (141 aa).

The signal sequence occupies residues 1–17; that stretch reads MVKRGRFALCLAVLLGA. C18 carries N-palmitoyl cysteine lipidation. C18 is lipidated: S-diacylglycerol cysteine.

It localises to the cell membrane. The protein is 15 kDa lipoprotein (tpp15) of Treponema pallidum (strain Nichols).